The sequence spans 767 residues: Receptor-type tyrosine-protein phosphatase-like ida-1 (767 aa).

Residues 1 to 19 (MRFFHSIIVLLFSISTGSA) form the signal peptide. Residues 20 to 398 (FLLYGCNLSE…SLPVESSERD (379 aa)) lie on the Lumenal side of the membrane. Asn26 and Asn146 each carry an N-linked (GlcNAc...) asparagine glycan. Residues 399–419 (WLLMPVLFVCAFTVTALGLVA) traverse the membrane as a helical segment. At 420–767 (AVQIARSRRH…NHLLKSIATK (348 aa)) the chain is on the cytoplasmic side. The Tyrosine-protein phosphatase domain maps to 527-756 (SQNRTILPFD…KLVYGCVAQE (230 aa)).

The protein belongs to the protein-tyrosine phosphatase family. Receptor class 8 subfamily. In terms of processing, proteolytically cleaved probably at a dibasic consensus sequence by egl-3. As to expression, in hermaphrodites specifically expressed in neurons and in particular in the head nerve ring (ADE, ALA, ASI, ASK, AUA, ASG, AVH and AVJ neurons), in the ventral nerve cord, pre-anal ganglia (PVP neuron), in the tail (PHA, PHB and PHC neurons) and in vulval motor neurons VC and HSN and the vulval uv1 cells. In males, also expressed in neurons anterior to the nerve ring and male-specific neurons in the tail.

It localises to the cytoplasmic vesicle membrane. It is found in the perikaryon. Its subcellular location is the cell projection. The protein localises to the axon. The protein resides in the dendrite. Its function is as follows. Regulates dense-core vesicle (DCV) trafficking and/or secretion. Probably by controlling DCV trafficking, plays a role in the AVG neuron-mediated formation of the right axon tract of the ventral nerve cord. Involved in locomotion by regulating acetylcholine release. Probably by controlling the secretion of FLP neuropeptides, regulates the turning step of male mating behavior. Plays a role in preventing dauer formation. The protein is Receptor-type tyrosine-protein phosphatase-like ida-1 of Caenorhabditis elegans.